Here is an 839-residue protein sequence, read N- to C-terminus: Sodium/hydrogen exchanger 3 (839 aa).

A signal peptide spans Met1–Gly32. Residues Val33–His56 are Extracellular-facing. A helical membrane pass occupies residues Val57 to Leu79. The Cytoplasmic segment spans residues Ser80–Val87. A helical transmembrane segment spans residues Pro88–Ala107. The Extracellular portion of the chain corresponds to Asp108–Thr116. A helical membrane pass occupies residues Pro117–Tyr134. Residues Phe135 to Pro137 lie on the Cytoplasmic side of the membrane. Residues Asn138–Ser173 form a helical membrane-spanning segment. Gly143, Gly146, and Thr147 together coordinate a 1,2-diacyl-sn-glycero-3-phospho-(1D-myo-inositol). At Gly174 to Phe186 the chain is on the extracellular side. The helical transmembrane segment at Leu187 to Val208 threads the bilayer. Residues His209–Val210 lie on the Cytoplasmic side of the membrane. The chain crosses the membrane as a helical span at residues Asn211–Leu242. At Gly243–Gly249 the chain is on the extracellular side. The chain crosses the membrane as a helical span at residues Val250–Thr284. Over Lys285 to His286 the chain is Cytoplasmic. Residues Val287–Leu309 form a helical membrane-spanning segment. At Ser310–Leu311 the chain is on the extracellular side. Residues Ser312–Val328 form a helical membrane-spanning segment. At Lys329–Gln335 the chain is on the cytoplasmic side. A helical membrane pass occupies residues Ser336 to Val364. The Extracellular segment spans residues Asp365 to Asn372. Residues Thr373–Gln394 form a helical membrane-spanning segment. Over Thr395 to Glu407 the chain is Cytoplasmic. Met403 contacts a 1,2-diacyl-sn-glycero-3-phospho-(1D-myo-inositol). The chain crosses the membrane as a helical span at residues Ile408–Leu431. Over Asp432–Glu438 the chain is Extracellular. A helical transmembrane segment spans residues Lys439–Lys472. Topologically, residues Ser473–Met839 are cytoplasmic. Positions 502, 503, and 505 each coordinate a 1,2-diacyl-sn-glycero-3-phospho-(1D-myo-inositol). Phosphoserine is present on residues Ser560 and Ser568. Residues Arg581–Glu595 form an interaction with EZR region. An interaction with NHERF4 region spans residues Asn596–Thr673. The segment at Val597 to Pro701 is interaction with AHCYL1. A phosphoserine mark is found at Ser598 and Ser613. Ser669 bears the Phosphoserine; by SGK1 mark. A compositionally biased stretch (basic residues) spans Lys688–Asn697. The tract at residues Lys688–Pro710 is disordered. Phosphoserine occurs at positions 724, 815, and 818.

It belongs to the monovalent cation:proton antiporter 1 (CPA1) transporter (TC 2.A.36) family. Homodimer. Found in the forms of complex and dynamic macromolecular complexes. Binds NHERF1 and NHERF2. Interacts with CHP1, CHP2 and SHANK2. Interacts with NHERF4 and interactions decrease in response to elevated calcium ion levels. Interacts with PDZK1 (via C-terminal PDZ domain). Interacts with AHCYL1; the interaction is required for SLC9A3 activity. Interacts with EZR; interaction targets SLC9A3 to the apical membrane. Interacts with SNX27 (via PDZ domains); directs SLC9A3 membrane insertion from early endosomes to the plasma membrane. Post-translationally, phosphorylated by PKA, which inhibits activity. Phosphorylation at Ser-669 by SGK1 is associated with increased abundance at the cell membrane.

Its subcellular location is the apical cell membrane. It localises to the cell membrane. The protein resides in the recycling endosome membrane. The protein localises to the early endosome membrane. The enzyme catalyses Na(+)(in) + H(+)(out) = Na(+)(out) + H(+)(in). Its activity is regulated as follows. Seems to switch between active and inactive modes in response to various stimuli. Activated directly or indirectly by membrane phosphatidylinositol (PIs). Regulated by a variety of auxiliary proteins, which facilitate the maturation, cell surface expression and function of the transporter. Inhibited specifically by the drug tenapanor. Its function is as follows. Plasma membrane Na(+)/H(+) antiporter. Exchanges intracellular H(+) ions for extracellular Na(+) in 1:1 stoichiometry, playing a key role in salt and fluid absorption and pH homeostasis. Major apical Na(+)/H(+) exchanger in kidney and intestine playing an important role in renal and intestine Na(+) absorption and blood pressure regulation. This Didelphis virginiana (North American opossum) protein is Sodium/hydrogen exchanger 3 (SLC9A3).